Consider the following 187-residue polypeptide: Dihydrofolate reductase type A10 (187 aa).

Residues asparagine 2–arginine 174 enclose the DHFR domain.

Belongs to the dihydrofolate reductase family. In terms of assembly, homodimer.

It carries out the reaction (6S)-5,6,7,8-tetrahydrofolate + NADP(+) = 7,8-dihydrofolate + NADPH + H(+). The protein operates within cofactor biosynthesis; tetrahydrofolate biosynthesis; 5,6,7,8-tetrahydrofolate from 7,8-dihydrofolate: step 1/1. In terms of biological role, key enzyme in folate metabolism. Catalyzes an essential reaction for de novo glycine and purine synthesis, and for DNA precursor synthesis. This chain is Dihydrofolate reductase type A10 (dfrA10), found in Escherichia coli.